The following is a 293-amino-acid chain: Fructose-bisphosphate aldolase (293 aa).

A D-glyceraldehyde 3-phosphate-binding site is contributed by S50. The active-site Proton donor is the D85. Zn(2+) is bound by residues H86, D106, E136, and H178. Residue G179 participates in dihydroxyacetone phosphate binding. Position 208 (H208) interacts with Zn(2+). Dihydroxyacetone phosphate-binding positions include 209–211 and 230–233; these read GGS and NVNT.

It belongs to the class II fructose-bisphosphate aldolase family. Zn(2+) is required as a cofactor.

It carries out the reaction beta-D-fructose 1,6-bisphosphate = D-glyceraldehyde 3-phosphate + dihydroxyacetone phosphate. It functions in the pathway carbohydrate degradation; glycolysis; D-glyceraldehyde 3-phosphate and glycerone phosphate from D-glucose: step 4/4. Functionally, catalyzes the aldol condensation of dihydroxyacetone phosphate (DHAP or glycerone-phosphate) with glyceraldehyde 3-phosphate (G3P) to form fructose 1,6-bisphosphate (FBP) in gluconeogenesis and the reverse reaction in glycolysis. This chain is Fructose-bisphosphate aldolase (fba), found in Streptococcus pyogenes serotype M6 (strain ATCC BAA-946 / MGAS10394).